The primary structure comprises 26 residues: AMP deaminase 1 (26 aa).

Belongs to the metallo-dependent hydrolases superfamily. Adenosine and AMP deaminases family. Homotetramer. The cofactor is Zn(2+).

It carries out the reaction AMP + H2O + H(+) = IMP + NH4(+). It participates in purine metabolism; IMP biosynthesis via salvage pathway; IMP from AMP: step 1/1. Functionally, AMP deaminase plays a critical role in energy metabolism. This is AMP deaminase 1 (AMPD1) from Oryctolagus cuniculus (Rabbit).